The following is a 373-amino-acid chain: Mitochondrial nicotinamide adenine dinucleotide transporter 1 (373 aa).

The Mitochondrial matrix portion of the chain corresponds to 1-80; it reads MTQTDNPVPN…WVPLSSTQIT (80 aa). Solcar repeat units lie at residues 75–166, 174–263, and 276–364; these read SSTQ…SKKF, FDFV…LKVR, and INLQ…FRNR. Residues 81-101 traverse the membrane as a helical segment; it reads ALSGAFAGFLSGVAVCPLDVA. At 102–141 the chain is on the mitochondrial intermembrane side; sequence KTRLQAQGLQTRFENPYYRGIMGTLSTIVRDEGPRGLYKG. Residues 142-162 form a helical membrane-spanning segment; the sequence is LVPIVLGYFPTWMIYFSVYEF. Over 163–176 the chain is Mitochondrial matrix; it reads SKKFFHGIFPQFDF. Residues 177–199 traverse the membrane as a helical segment; it reads VAQSCAAITAGAASTTLTNPIWV. At 200–235 the chain is on the mitochondrial intermembrane side; sequence VKTRLMLQSNLGEHPTHYKGTFDAFRKLFYQEGFKA. Residues 236–256 traverse the membrane as a helical segment; the sequence is LYAGLVPSLLGLFHVAIHFPI. Residues 257–280 are Mitochondrial matrix-facing; it reads YEDLKVRFHCYSRENNTNSINLQR. A helical membrane pass occupies residues 281–297; that stretch reads LIMASSVSKMIASAVTY. Over 298-335 the chain is Mitochondrial intermembrane; it reads PHEILRTRMQLKSDIPDSIQRRLFPLIKATYAQEGLKG. A helical transmembrane segment spans residues 336–358; that stretch reads FYSGFTTNLVRTIPASAITLVSF. At 359 to 373 the chain is on the mitochondrial matrix side; it reads EYFRNRLENISTMVI.

This sequence belongs to the mitochondrial carrier (TC 2.A.29) family.

Its subcellular location is the mitochondrion inner membrane. The catalysed reaction is dAMP(in) + NAD(+)(out) = dAMP(out) + NAD(+)(in). It carries out the reaction dGMP(in) + NAD(+)(out) = dGMP(out) + NAD(+)(in). The enzyme catalyses GMP(in) + NAD(+)(out) = GMP(out) + NAD(+)(in). It catalyses the reaction AMP(in) + NAD(+)(out) = AMP(out) + NAD(+)(in). The catalysed reaction is deamido-NAD(+)(in) + NAD(+)(out) = deamido-NAD(+)(out) + NAD(+)(in). In terms of biological role, mitochondrial inner membrane carrier protein that mediates the import of NAD(+) into mitochondria. Can transport NAD(+) by unidirectional transport or by exchange with intramitochondrially generated dAMP and dGMP. Also able to transport NAD(+) by exchange with AMP, GMP or deamido-NAD (+) in vitro. This is Mitochondrial nicotinamide adenine dinucleotide transporter 1 (YIA6) from Saccharomyces cerevisiae (strain ATCC 204508 / S288c) (Baker's yeast).